The chain runs to 970 residues: Protein translocase subunit SecA (970 aa).

Residues glutamine 99, 117–121 (GEGKT), and aspartate 631 each bind ATP.

This sequence belongs to the SecA family. Monomer and homodimer. Part of the essential Sec protein translocation apparatus which comprises SecA, SecYEG and auxiliary proteins SecDF. Other proteins may also be involved.

Its subcellular location is the cell inner membrane. It localises to the cytoplasm. The catalysed reaction is ATP + H2O + cellular proteinSide 1 = ADP + phosphate + cellular proteinSide 2.. Its function is as follows. Part of the Sec protein translocase complex. Interacts with the SecYEG preprotein conducting channel. Has a central role in coupling the hydrolysis of ATP to the transfer of proteins into and across the cell membrane, serving as an ATP-driven molecular motor driving the stepwise translocation of polypeptide chains across the membrane. This is Protein translocase subunit SecA from Chlamydia caviae (strain ATCC VR-813 / DSM 19441 / 03DC25 / GPIC) (Chlamydophila caviae).